Here is a 766-residue protein sequence, read N- to C-terminus: MGSAQARQRLLAIFGQVQAYIFQVEMLKRCDPSALLPLVGSLKLNALTIRMLRRKLGGALIEQAQHQQTPLACALTMALEYAEVEGERVLRAVDDVNLAGPEGFFRATMRLDEPCEYHVRVHLDTYGGPIDAEVQFLHDAENFLKQLNYCHLITGFEAGLDALESVARFLTRTVGSGIVVPPELCDPTHPCSVCFEELCVTANQGEAVHRRLLECTCDHITRQMAVRVANIDIARHLPHALSVASERRAAAEAALRALEARRVQGHNGKSAGTEDPTQQVASRLLESHHVFKPASRCLYAVSELKFWLASTKHGDMGQPRAIDTFTENLETLDKQEKFFHLQAATVELALFGRTLDHFDRLFADQLLGLDVIDGMLVGSCAVSPDDHIEALIKACYTHHMSAPLLQRLTDPDTSNREALKQLLGRIGVDTDDGAGELGDALDVDLDNLGGAPPVNSTPCGEDALCRTVSEERPWDKLLERATADASQRRRMYAERLSKRSIASLGRCVREQRRELEKTLRVNVYGEVLLHTYVSSYNGFCARRGFCAAVSRAGTIIDNRSSTSAFDSHQFMKAALLRHPIDQSLMPSITHKFFELINGPVFDNAGHNFAQPPNTALYYSVENVGLLPHLKEELARFMITAAKGDWSISEFQRFYCFEGVTGVTATQRLAWKYIGELILAAAVFSSVFHCGEVRLLRADRTYPDSSGAQRCVSGIYITYEASCPLVAVLSAAPHGAIGAETVVIYDSDVFSLLYAVLQQLAPGSGAN.

Residues 191 to 219 (CSVCFEELCVTANQGEAVHRRLLECTCDH) form a C3H1-type zinc finger. Residue 683–690 (FSSVFHCG) participates in ATP binding.

This sequence belongs to the herpesviridae TRM1 protein family. In terms of assembly, associates with TRM2 and TRM3 to form the tripartite terminase complex. Interacts with portal protein.

Its subcellular location is the host nucleus. Its function is as follows. Component of the molecular motor that translocates viral genomic DNA in empty capsid during DNA packaging. Forms a tripartite terminase complex together with TRM2 and TRM3 in the host cytoplasm. Once the complex reaches the host nucleus, it interacts with the capsid portal vertex. This portal forms a ring in which genomic DNA is translocated into the capsid. TRM1 carries an endonuclease activity that plays an important role for the cleavage of concatemeric viral DNA into unit length genomes. In Equus caballus (Horse), this protein is Tripartite terminase subunit 1.